Consider the following 400-residue polypeptide: MKFTPPPSSLRGPLVIPDKIMMGPGPSNCSKRVLAALNNTCLSNFHDELFQVIDEVKDGLRYIFQTENRTTMCITGSAHTGMEALLCNLLEEGDIVLIANNGIWAERAINMATRYGADVRVLGGPADKPFSMTDFKKAIEQHRPKCLFVVHGDSSSGLLQPLEGLGKICHDYDCLLLVDAVASLCGVPFYMDKWEIDGVYTGSQKVLGAPPGITPISISPKALEVIRSRKTPSKVFYWDLLILGNYWGCYDEQKRYHHTVPSNLIFALREAIAQIAEEGLEPVIRRRQECAEQMYRGLQAMGLEIFVKDPEYRLPTVTCIMIPKGVNWWKVSEYAMNNFSLEIQGGFGPTMGIAWRAGIMGESSTLQRVNFYLYAFKESLKATHPDYVFEKKNGQTNGTK.

The tract at residues 43–44 (SN) is binds to and confers specificity for 3-hydroxykynurenine; shared with dimeric partner. Pyridoxal 5'-phosphate is bound by residues 77–79 (SAH), serine 154, and glutamine 204. Substrate is bound at residue serine 154. Lysine 205 is modified (N6-(pyridoxal phosphate)lysine). Pyridoxal 5'-phosphate is bound by residues tyrosine 256 and threonine 259. Arginine 356 lines the substrate pocket.

It belongs to the class-V pyridoxal-phosphate-dependent aminotransferase family. Homodimer. May form homotetramer. It depends on pyridoxal 5'-phosphate as a cofactor.

The protein localises to the peroxisome. The enzyme catalyses glyoxylate + L-alanine = glycine + pyruvate. The catalysed reaction is L-kynurenine + glyoxylate = kynurenate + glycine + H2O. It carries out the reaction 3-hydroxy-L-kynurenine + glyoxylate = xanthurenate + glycine + H2O. It catalyses the reaction 3-hydroxy-L-kynurenine + pyruvate = xanthurenate + L-alanine + H2O. The enzyme catalyses L-kynurenine + pyruvate = kynurenate + L-alanine + H2O. The catalysed reaction is 2-oxobutanoate + L-alanine = (2S)-2-aminobutanoate + pyruvate. It carries out the reaction L-phenylalanine + pyruvate = 3-phenylpyruvate + L-alanine. It catalyses the reaction L-serine + pyruvate = 3-hydroxypyruvate + L-alanine. The enzyme catalyses L-cysteine + pyruvate = 2-oxo-3-sulfanylpropanoate + L-alanine. The catalysed reaction is 3-hydroxy-L-kynurenine + oxaloacetate = 4-(2-amino-3-hydroxyphenyl)-2,4-dioxobutanoate + L-aspartate. It carries out the reaction 3-hydroxy-L-kynurenine + 3-phenylpyruvate = 4-(2-amino-3-hydroxyphenyl)-2,4-dioxobutanoate + L-phenylalanine. It catalyses the reaction L-kynurenine + oxaloacetate = 4-(2-aminophenyl)-2,4-dioxobutanoate + L-aspartate. The enzyme catalyses 3-phenylpyruvate + L-kynurenine = 4-(2-aminophenyl)-2,4-dioxobutanoate + L-phenylalanine. Its pathway is amino-acid degradation; L-kynurenine degradation; kynurenate from L-kynurenine: step 1/2. Catalyzes the pyridoxal 5'-phosphate-dependent transamination of both 3-hydroxykynurenine and L-kynurenine to xanthurenic acid and kynurenic acid, respectively, preferentially using the alpha-ketoacid pyruvate, glyoxylate or oxaloacetate as the amino group acceptor. The affinity and catalytic efficiency for 3-hydroxykynurenine is higher than for L-kynurenine. Involved in the detoxification of cytotoxic metabolite 3-hydroxykynurenine generated by the hydroxylation of L-kynurenine, an intermediate in the tryptophan catabolism pathway. Also catalyzes, although with a lesser efficiency, the transamination of alanine with glyoxylate as an amino group acceptor. May play a role in the detoxification of glyoxylate, a toxic plant metabolite from the diet. The polypeptide is 3-hydroxykynurenine transaminase (Aedes aegypti (Yellowfever mosquito)).